Consider the following 370-residue polypeptide: 2-oxoisovalerate dehydrogenase subunit beta, mitochondrial (370 aa).

The transit peptide at 1 to 25 (MLRGNNIKKVNSLLVRSFHSTVGNR) directs the protein to the mitochondrion. Tyrosine 130 lines the thiamine diphosphate pocket. The K(+) site is built by glycine 156, leucine 158, threonine 159, and glutamate 209.

As to quaternary structure, heterotetramer of 2 alpha and 2 beta chains. Thiamine diphosphate is required as a cofactor.

Its subcellular location is the mitochondrion matrix. The catalysed reaction is N(6)-[(R)-lipoyl]-L-lysyl-[protein] + 3-methyl-2-oxobutanoate + H(+) = N(6)-[(R)-S(8)-2-methylpropanoyldihydrolipoyl]-L-lysyl-[protein] + CO2. Its function is as follows. The branched-chain alpha-keto dehydrogenase complex catalyzes the overall conversion of alpha-keto acids to acyl-CoA and CO(2). It contains multiple copies of three enzymatic components: branched-chain alpha-keto acid decarboxylase (E1), lipoamide acyltransferase (E2) and lipoamide dehydrogenase (E3). This chain is 2-oxoisovalerate dehydrogenase subunit beta, mitochondrial (bkdB), found in Dictyostelium discoideum (Social amoeba).